We begin with the raw amino-acid sequence, 354 residues long: Chorismate synthase (354 aa).

NADP(+)-binding residues include Arg48 and Arg54. FMN is bound by residues 125 to 127 (RSS), 238 to 239 (NA), Gly278, 293 to 297 (KPTSS), and Arg319.

It belongs to the chorismate synthase family. Homotetramer. FMNH2 serves as cofactor.

It catalyses the reaction 5-O-(1-carboxyvinyl)-3-phosphoshikimate = chorismate + phosphate. Its pathway is metabolic intermediate biosynthesis; chorismate biosynthesis; chorismate from D-erythrose 4-phosphate and phosphoenolpyruvate: step 7/7. In terms of biological role, catalyzes the anti-1,4-elimination of the C-3 phosphate and the C-6 proR hydrogen from 5-enolpyruvylshikimate-3-phosphate (EPSP) to yield chorismate, which is the branch point compound that serves as the starting substrate for the three terminal pathways of aromatic amino acid biosynthesis. This reaction introduces a second double bond into the aromatic ring system. The sequence is that of Chorismate synthase from Blochmanniella pennsylvanica (strain BPEN).